The primary structure comprises 347 residues: tRNA pseudouridine synthase D (347 aa).

Residue Asp78 is the Nucleophile of the active site. The TRUD domain occupies 150-304 (GLPNFFGPQR…AEGTRRAARL (155 aa)).

It belongs to the pseudouridine synthase TruD family.

It carries out the reaction uridine(13) in tRNA = pseudouridine(13) in tRNA. Functionally, responsible for synthesis of pseudouridine from uracil-13 in transfer RNAs. This chain is tRNA pseudouridine synthase D, found in Anaeromyxobacter dehalogenans (strain 2CP-C).